The chain runs to 270 residues: Putative hydro-lyase H16_B1759 (270 aa).

This sequence belongs to the D-glutamate cyclase family.

The polypeptide is Putative hydro-lyase H16_B1759 (Cupriavidus necator (strain ATCC 17699 / DSM 428 / KCTC 22496 / NCIMB 10442 / H16 / Stanier 337) (Ralstonia eutropha)).